Reading from the N-terminus, the 355-residue chain is UDP-N-acetylglucosamine--N-acetylmuramyl-(pentapeptide) pyrophosphoryl-undecaprenol N-acetylglucosamine transferase (355 aa).

UDP-N-acetyl-alpha-D-glucosamine contacts are provided by residues 15–17, Asn-127, Arg-163, Ser-191, Ile-244, 263–268, and Gln-288; these read TGG and ALTVSE.

The protein belongs to the glycosyltransferase 28 family. MurG subfamily.

The protein localises to the cell inner membrane. It catalyses the reaction di-trans,octa-cis-undecaprenyl diphospho-N-acetyl-alpha-D-muramoyl-L-alanyl-D-glutamyl-meso-2,6-diaminopimeloyl-D-alanyl-D-alanine + UDP-N-acetyl-alpha-D-glucosamine = di-trans,octa-cis-undecaprenyl diphospho-[N-acetyl-alpha-D-glucosaminyl-(1-&gt;4)]-N-acetyl-alpha-D-muramoyl-L-alanyl-D-glutamyl-meso-2,6-diaminopimeloyl-D-alanyl-D-alanine + UDP + H(+). It participates in cell wall biogenesis; peptidoglycan biosynthesis. Cell wall formation. Catalyzes the transfer of a GlcNAc subunit on undecaprenyl-pyrophosphoryl-MurNAc-pentapeptide (lipid intermediate I) to form undecaprenyl-pyrophosphoryl-MurNAc-(pentapeptide)GlcNAc (lipid intermediate II). In Escherichia coli (strain 55989 / EAEC), this protein is UDP-N-acetylglucosamine--N-acetylmuramyl-(pentapeptide) pyrophosphoryl-undecaprenol N-acetylglucosamine transferase.